The primary structure comprises 578 residues: 2-hydroxyacyl-CoA lyase 1 (578 aa).

Ser-4 carries the phosphoserine modification. Glu-60 contributes to the thiamine diphosphate binding site. N6-succinyllysine is present on residues Lys-351, Lys-358, and Lys-365. The interval Thr-401–Tyr-486 is thiamine pyrophosphate binding. Residues Asp-455 and Asn-482 each coordinate Mg(2+). The Microbody targeting signal signature appears at Ser-576 to Met-578.

It belongs to the TPP enzyme family. In terms of assembly, homotetramer. The cofactor is Mg(2+). It depends on thiamine diphosphate as a cofactor. As to expression, widely expressed.

It is found in the peroxisome. The catalysed reaction is a 2-hydroxy-3-methyl fatty acyl-CoA = a 2-methyl-branched fatty aldehyde + formyl-CoA. It catalyses the reaction an (R)-2-hydroxy-long-chain-fatty acyl-CoA = a long-chain fatty aldehyde + formyl-CoA. It carries out the reaction 2-hydroxy-3-methylhexadecanoyl-CoA = 2-methylpentadecanal + formyl-CoA. The enzyme catalyses 2-hydroxyoctadecanoyl-CoA = heptadecanal + formyl-CoA. The catalysed reaction is 2-hydroxyphytanoyl-CoA = 2,6,10,14-tetramethylpentadecanal + formyl-CoA. The protein operates within lipid metabolism; fatty acid metabolism. Peroxisomal 2-OH acyl-CoA lyase involved in the cleavage (C1 removal) reaction in the fatty acid alpha-oxydation in a thiamine pyrophosphate (TPP)-dependent manner. Involved in the degradation of 3-methyl-branched fatty acids like phytanic acid and the shortening of 2-hydroxy long-chain fatty acids. Plays a significant role in the biosynthesis of heptadecanal in the liver. This chain is 2-hydroxyacyl-CoA lyase 1, found in Homo sapiens (Human).